A 158-amino-acid polypeptide reads, in one-letter code: Eukaryotic translation initiation factor 5A-1 (158 aa).

The segment covering 1–10 (MSDEEHHFES) has biased composition (basic and acidic residues). A disordered region spans residues 1-21 (MSDEEHHFESSDAGASKTYPQ). At S2 the chain carries Phosphoserine. A Hypusine modification is found at K51.

The protein belongs to the eIF-5A family. Lys-51 undergoes hypusination, a unique post-translational modification that consists in the addition of a butylamino group from spermidine to lysine side chain, leading to the formation of the unusual amino acid hypusine. eIF-5As are the only known proteins to undergo this modification, which is essential for their function. In terms of tissue distribution, expressed in leaf vasculature and inflorescence stems. Present in xylem tissue but not in phloem, and in developing vessel members, but not in mature vessels members. Detected in anthers.

In terms of biological role, translation factor that promotes translation elongation and termination, particularly upon ribosome stalling at specific amino acid sequence contexts. Binds between the exit (E) and peptidyl (P) site of the ribosome and promotes rescue of stalled ribosome: specifically required for efficient translation of polyproline-containing peptides as well as other motifs that stall the ribosome. Acts as a ribosome quality control (RQC) cofactor by joining the RQC complex to facilitate peptidyl transfer during CAT tailing step. Involved in xylogenesis. This Arabidopsis thaliana (Mouse-ear cress) protein is Eukaryotic translation initiation factor 5A-1 (ELF5A-1).